Consider the following 321-residue polypeptide: Electron transfer flavoprotein subunit alpha (321 aa).

Residues Arg211, Ser236, Arg237, Gln250, Val251, Ser254, Gly255, Ser270, Ser272, Gln274, His275, Asn289, Asp307, and Ile308 each coordinate FAD.

Heterodimer of an alpha and a beta subunit. Forms a ternary complex with trimethylamine dehydrogenase. FAD is required as a cofactor.

Functionally, heterodimeric electron transfer flavoprotein that accepts electrons from trimethylamine dehydrogenase. It transfers the electrons to the main respiratory chain via ETF-ubiquinone oxidoreductase (ETF dehydrogenase). This chain is Electron transfer flavoprotein subunit alpha (etfA), found in Methylophilus methylotrophus (Bacterium W3A1).